Here is a 437-residue protein sequence, read N- to C-terminus: Adenylosuccinate synthetase, organellar chromatophore (437 aa).

GTP is bound by residues 12–18 (GDEGKGK) and 40–42 (GHT). Asp-13 functions as the Proton acceptor in the catalytic mechanism. Positions 13 and 40 each coordinate Mg(2+). Residues 13 to 16 (DEGK), 38 to 41 (NAGH), Thr-128, Arg-142, Gln-223, Thr-238, and Arg-302 contribute to the IMP site. The Proton donor role is filled by His-41. 298–304 (TTTGRRR) contributes to the substrate binding site. GTP-binding positions include Arg-304 and 330–332 (KLD).

The protein belongs to the adenylosuccinate synthetase family. Homodimer. It depends on Mg(2+) as a cofactor.

The protein localises to the plastid. Its subcellular location is the organellar chromatophore. It catalyses the reaction IMP + L-aspartate + GTP = N(6)-(1,2-dicarboxyethyl)-AMP + GDP + phosphate + 2 H(+). It participates in purine metabolism; AMP biosynthesis via de novo pathway; AMP from IMP: step 1/2. Its function is as follows. Plays an important role in the de novo pathway and in the salvage pathway of purine nucleotide biosynthesis. Catalyzes the first committed step in the biosynthesis of AMP from IMP. This chain is Adenylosuccinate synthetase, organellar chromatophore, found in Paulinella chromatophora.